Here is a 240-residue protein sequence, read N- to C-terminus: Uridylate kinase (240 aa).

14-17 is a binding site for ATP; sequence KLSG. A UMP-binding site is contributed by G56. The ATP site is built by G57 and R61. UMP-binding positions include D76 and 137-144; that span reads TGNPFFTT. ATP is bound by residues T164, Y170, and D173.

It belongs to the UMP kinase family. Homohexamer.

Its subcellular location is the cytoplasm. The enzyme catalyses UMP + ATP = UDP + ADP. It functions in the pathway pyrimidine metabolism; CTP biosynthesis via de novo pathway; UDP from UMP (UMPK route): step 1/1. Its activity is regulated as follows. Inhibited by UTP. Catalyzes the reversible phosphorylation of UMP to UDP. The sequence is that of Uridylate kinase from Albidiferax ferrireducens (strain ATCC BAA-621 / DSM 15236 / T118) (Rhodoferax ferrireducens).